We begin with the raw amino-acid sequence, 765 residues long: ATP-dependent zinc metalloprotease FtsH (765 aa).

The Cytoplasmic segment spans residues 1-27 (MSNTSNFNERVTENAKPPKNVKSIIWK). A helical transmembrane segment spans residues 28-48 (TIGIIIVMAIIIGLILFYVLP). At 49–213 (RNTIANISNI…NVQLPNQSTA (165 aa)) the chain is on the extracellular side. The chain crosses the membrane as a helical span at residues 214–234 (ILTQFLTSIIPFVILIVIYIV). Residues 235-765 (IARRFSRTMG…EPTASTASSN (531 aa)) lie on the Cytoplasmic side of the membrane. 314–321 (GPPGTGKT) is an ATP binding site. H536 is a Zn(2+) binding site. E537 is an active-site residue. Residues H540 and D615 each contribute to the Zn(2+) site. A compositionally biased stretch (basic and acidic residues) spans 730–748 (KAAAEKEEQAEKAKLDHQS). A disordered region spans residues 730 to 765 (KAAAEKEEQAEKAKLDHQSDSAQPQEEPTASTASSN). Residues 749–765 (DSAQPQEEPTASTASSN) are compositionally biased toward polar residues.

It in the central section; belongs to the AAA ATPase family. This sequence in the C-terminal section; belongs to the peptidase M41 family. As to quaternary structure, homohexamer. Zn(2+) is required as a cofactor.

Its subcellular location is the cell membrane. In terms of biological role, acts as a processive, ATP-dependent zinc metallopeptidase for both cytoplasmic and membrane proteins. Plays a role in the quality control of integral membrane proteins. The protein is ATP-dependent zinc metalloprotease FtsH of Mycoplasmoides gallisepticum (strain R(high / passage 156)) (Mycoplasma gallisepticum).